We begin with the raw amino-acid sequence, 345 residues long: Probable deoxyhypusine synthase 2 (345 aa).

Lys292 (nucleophile) is an active-site residue.

It belongs to the deoxyhypusine synthase family. NAD(+) serves as cofactor.

It carries out the reaction [eIF5A protein]-L-lysine + spermidine = [eIF5A protein]-deoxyhypusine + propane-1,3-diamine. Its pathway is protein modification; eIF5A hypusination. Its function is as follows. Catalyzes the NAD-dependent oxidative cleavage of spermidine and the subsequent transfer of the butylamine moiety of spermidine to the epsilon-amino group of a specific lysine residue of the eIF-5A precursor protein to form the intermediate deoxyhypusine residue. The protein is Probable deoxyhypusine synthase 2 (dys2) of Methanosarcina mazei (strain ATCC BAA-159 / DSM 3647 / Goe1 / Go1 / JCM 11833 / OCM 88) (Methanosarcina frisia).